Reading from the N-terminus, the 464-residue chain is tRNA modification GTPase MnmE (464 aa).

Residues arginine 27, glutamate 90, and lysine 129 each coordinate (6S)-5-formyl-5,6,7,8-tetrahydrofolate. Residues 222–384 (GVTLVLAGSV…LYDKIKTLIS (163 aa)) form the TrmE-type G domain. GTP-binding positions include 232–237 (NAGKSS), 251–257 (SSYPGTT), and 276–279 (DTAG). Serine 236 and threonine 257 together coordinate Mg(2+). Position 464 (lysine 464) interacts with (6S)-5-formyl-5,6,7,8-tetrahydrofolate.

This sequence belongs to the TRAFAC class TrmE-Era-EngA-EngB-Septin-like GTPase superfamily. TrmE GTPase family. Homodimer. Heterotetramer of two MnmE and two MnmG subunits. K(+) is required as a cofactor.

It is found in the cytoplasm. In terms of biological role, exhibits a very high intrinsic GTPase hydrolysis rate. Involved in the addition of a carboxymethylaminomethyl (cmnm) group at the wobble position (U34) of certain tRNAs, forming tRNA-cmnm(5)s(2)U34. This chain is tRNA modification GTPase MnmE, found in Borrelia garinii subsp. bavariensis (strain ATCC BAA-2496 / DSM 23469 / PBi) (Borreliella bavariensis).